We begin with the raw amino-acid sequence, 360 residues long: DNA integrity scanning protein DisA (360 aa).

In terms of domain architecture, DAC spans 11–149 (ELDLSSILQF…ENMKYTLKDI (139 aa)). ATP contacts are provided by residues G78, L96, and 109-113 (MRHRT).

Belongs to the DisA family. In terms of assembly, homooligomer. Interacts with RadA. Mg(2+) is required as a cofactor.

The protein resides in the cytoplasm. It catalyses the reaction 2 ATP = 3',3'-c-di-AMP + 2 diphosphate. Its activity is regulated as follows. Diadenylate cyclase (DAC) activity is inhibited 2-fold by Holliday junction (HJ) DNA, further addition of RecG inhibits DAC activity 11-fold; RecG may relocate DisA from the HJ. DAC is inhibited by the interaction with RadA. Diadenylate cyclase activity is not affected by ssDNA or dsDNA, but three- and four-way junctions strongly inhibit the activity of DisA, suggesting the enzyme is regulated by branched nucleic acids. In terms of biological role, participates in a DNA-damage check-point that is active prior to asymmetric division when DNA is damaged. Forms globular foci that rapidly scan along the chromosomes during sporulation, searching for lesions. Its ability to scan through the chromosome rapidly is due to its non-specific DNA-binding. When a lesion is present, DisA pauses at the lesion site. This triggers a cellular response that culminates in a temporary block in sporulation initiation. It is required, at least partially, to inhibit the activity of the transcription factor spo0A, which controls, among others, early sporulation genes. In B.subtilis c-di-AMP is a second messenger that mediates growth, DNA repair and cell wall homeostasis; it is toxic when present in excess. Limits the replication fork reggression activity of RecG; DisA inhibits the ATPase activity of RecG. By limiting RecG-mediated fork regression, DisA provides time for removal of potentially lethal DNA lesions. One of 3 paralogous diadenylate cyclases (DAC) in this bacteria. Has diadenylate cyclase activity, catalyzing the condensation of 2 ATP molecules into cyclic di-AMP (c-di-AMP). c-di-AMP acts as a signaling molecule that couples DNA integrity with progression of sporulation. The rise in c-di-AMP level generated by DisA while scanning the chromosome operates as a positive signal that advances sporulation; upon encountering a lesion, the DisA focus arrests at the damaged site and halts c-di-AMP synthesis. Does not convert GTP to c-di-GMP. This Bacillus subtilis (strain 168) protein is DNA integrity scanning protein DisA.